The primary structure comprises 89 residues: MALDQQAKAKIRAEYATVEGDTGSPEVQVAVLTKRIADLTEHLKVHKHDHHSRRGLLLLVGRRRRLLNYVQKKDINRYRSLIERLGLRR.

Belongs to the universal ribosomal protein uS15 family. In terms of assembly, part of the 30S ribosomal subunit. Forms a bridge to the 50S subunit in the 70S ribosome, contacting the 23S rRNA.

Functionally, one of the primary rRNA binding proteins, it binds directly to 16S rRNA where it helps nucleate assembly of the platform of the 30S subunit by binding and bridging several RNA helices of the 16S rRNA. Its function is as follows. Forms an intersubunit bridge (bridge B4) with the 23S rRNA of the 50S subunit in the ribosome. The sequence is that of Small ribosomal subunit protein uS15 from Salinispora tropica (strain ATCC BAA-916 / DSM 44818 / JCM 13857 / NBRC 105044 / CNB-440).